Reading from the N-terminus, the 348-residue chain is Dihydroorotase (348 aa).

Histidine 17 and histidine 19 together coordinate Zn(2+). Residues 19–21 and asparagine 45 contribute to the substrate site; that span reads HLR. Residues lysine 103, histidine 140, and histidine 178 each coordinate Zn(2+). Lysine 103 carries the N6-carboxylysine modification. A substrate-binding site is contributed by histidine 140. A substrate-binding site is contributed by leucine 223. Residue aspartate 251 coordinates Zn(2+). The active site involves aspartate 251. Histidine 255 and alanine 267 together coordinate substrate.

Belongs to the metallo-dependent hydrolases superfamily. DHOase family. Class II DHOase subfamily. In terms of assembly, homodimer. Zn(2+) serves as cofactor.

The enzyme catalyses (S)-dihydroorotate + H2O = N-carbamoyl-L-aspartate + H(+). It functions in the pathway pyrimidine metabolism; UMP biosynthesis via de novo pathway; (S)-dihydroorotate from bicarbonate: step 3/3. Functionally, catalyzes the reversible cyclization of carbamoyl aspartate to dihydroorotate. The chain is Dihydroorotase from Enterobacter sp. (strain 638).